The primary structure comprises 148 residues: Large ribosomal subunit protein uL13 (148 aa).

This sequence belongs to the universal ribosomal protein uL13 family. In terms of assembly, part of the 50S ribosomal subunit.

Functionally, this protein is one of the early assembly proteins of the 50S ribosomal subunit, although it is not seen to bind rRNA by itself. It is important during the early stages of 50S assembly. This chain is Large ribosomal subunit protein uL13, found in Ureaplasma parvum serovar 3 (strain ATCC 27815 / 27 / NCTC 11736).